We begin with the raw amino-acid sequence, 81 residues long: Short neurotoxin 2 (81 aa).

A signal peptide spans 1-21; it reads MKTLLLTLVVVTIVCLDLGYT. 4 disulfide bridges follow: cysteine 24–cysteine 43, cysteine 38–cysteine 60, cysteine 62–cysteine 73, and cysteine 74–cysteine 79.

The protein belongs to the three-finger toxin family. Short-chain subfamily. Type I alpha-neurotoxin sub-subfamily. In terms of tissue distribution, expressed by the venom gland.

The protein localises to the secreted. Binds to muscle nicotinic acetylcholine receptor (nAChR) and inhibit acetylcholine from binding to the receptor, thereby impairing neuromuscular transmission. This is Short neurotoxin 2 from Drysdalia coronoides (White-lipped snake).